Consider the following 259-residue polypeptide: Tryptophan synthase alpha chain (259 aa).

Active-site proton acceptor residues include Glu-35 and Asp-46.

The protein belongs to the TrpA family. In terms of assembly, tetramer of two alpha and two beta chains.

It carries out the reaction (1S,2R)-1-C-(indol-3-yl)glycerol 3-phosphate + L-serine = D-glyceraldehyde 3-phosphate + L-tryptophan + H2O. The protein operates within amino-acid biosynthesis; L-tryptophan biosynthesis; L-tryptophan from chorismate: step 5/5. Its function is as follows. The alpha subunit is responsible for the aldol cleavage of indoleglycerol phosphate to indole and glyceraldehyde 3-phosphate. The polypeptide is Tryptophan synthase alpha chain (Methanococcus vannielii (strain ATCC 35089 / DSM 1224 / JCM 13029 / OCM 148 / SB)).